The chain runs to 276 residues: Phosphate import ATP-binding protein PstB (276 aa).

The 249-residue stretch at 23–271 (VNNKNIVYDT…PSDQRTEDYI (249 aa)) folds into the ABC transporter domain. 62–69 (GPSGCGKS) lines the ATP pocket.

The protein belongs to the ABC transporter superfamily. Phosphate importer (TC 3.A.1.7) family. In terms of assembly, the complex is composed of two ATP-binding proteins (PstB), two transmembrane proteins (PstC and PstA) and a solute-binding protein (PstS).

The protein resides in the cell membrane. The enzyme catalyses phosphate(out) + ATP + H2O = ADP + 2 phosphate(in) + H(+). Its function is as follows. Part of the ABC transporter complex PstSACB involved in phosphate import. Responsible for energy coupling to the transport system. In Oceanobacillus iheyensis (strain DSM 14371 / CIP 107618 / JCM 11309 / KCTC 3954 / HTE831), this protein is Phosphate import ATP-binding protein PstB.